The sequence spans 1049 residues: Nonsense-mediated mRNA decay protein 2 (1049 aa).

The region spanning 41–282 (LKKNTAFMKR…SLNSYVDKLE (242 aa)) is the MIF4G 1 domain. Tyrosine 60 is modified (phosphotyrosine). Positions 412 to 421 (SQEGIRSSSE) are enriched in polar residues. A disordered region spans residues 412–438 (SQEGIRSSSENNKKEDDLKDSTGDLNT). The span at 422 to 433 (NNKKEDDLKDST) shows a compositional bias: basic and acidic residues. MIF4G domains lie at 446-634 (DNFL…VNPP) and 649-855 (EFLY…VRPS). The tract at residues 909-934 (DISDESETDEESSGLEESDLLDSEDE) is disordered.

Its subcellular location is the cytoplasm. Functionally, involved in nonsense-mediated decay of mRNAs containing premature stop codons. It interacts, via its C-terminus, with NAM7/UPF1. Could be involved in determining the efficiency of translational termination or reinitiation or factors involved in the initial assembly of an initiation- and termination-competent mRNP. This Schizosaccharomyces pombe (strain 972 / ATCC 24843) (Fission yeast) protein is Nonsense-mediated mRNA decay protein 2 (upf2).